A 109-amino-acid polypeptide reads, in one-letter code: FK506-binding protein (109 aa).

The region spanning 20 to 108 (GKEITVHYTG…IFEVELLKVY (89 aa)) is the PPIase FKBP-type domain.

This sequence belongs to the FKBP-type PPIase family.

It carries out the reaction [protein]-peptidylproline (omega=180) = [protein]-peptidylproline (omega=0). Inhibited by FK506. PPIases accelerate the folding of proteins. This chain is FK506-binding protein (fbp), found in Neisseria meningitidis serogroup A / serotype 4A (strain DSM 15465 / Z2491).